A 184-amino-acid polypeptide reads, in one-letter code: MKLIAGLGNPGKKYERTRHNVGFMVVDELSFRHQTPWKKSKFNGMVSEINVGGEKMILVKPLTFMNASGECIRPLMDYYNIQIEDVLIVYDDLDLPVGKIRLRQKGSAGGHNGMKSIIQHVKTQEFNRIRVGVSRPLKGEVIHYVLGDFPKAEQPDIIAAIQKSADAIEDFAQTPFIEVMNKYN.

Tyrosine 14 serves as a coordination point for tRNA. Histidine 19 acts as the Proton acceptor in catalysis. TRNA-binding residues include phenylalanine 64, asparagine 66, and asparagine 112.

This sequence belongs to the PTH family. As to quaternary structure, monomer.

The protein localises to the cytoplasm. The catalysed reaction is an N-acyl-L-alpha-aminoacyl-tRNA + H2O = an N-acyl-L-amino acid + a tRNA + H(+). In terms of biological role, hydrolyzes ribosome-free peptidyl-tRNAs (with 1 or more amino acids incorporated), which drop off the ribosome during protein synthesis, or as a result of ribosome stalling. Functionally, catalyzes the release of premature peptidyl moieties from peptidyl-tRNA molecules trapped in stalled 50S ribosomal subunits, and thus maintains levels of free tRNAs and 50S ribosomes. The polypeptide is Peptidyl-tRNA hydrolase (Listeria innocua serovar 6a (strain ATCC BAA-680 / CLIP 11262)).